The following is a 252-amino-acid chain: Thiazole synthase (252 aa).

The active-site Schiff-base intermediate with DXP is lysine 95. 1-deoxy-D-xylulose 5-phosphate is bound by residues glycine 156, alanine 182–glycine 183, and asparagine 204–threonine 205.

It belongs to the ThiG family. As to quaternary structure, homotetramer. Forms heterodimers with either ThiH or ThiS.

Its subcellular location is the cytoplasm. The enzyme catalyses [ThiS sulfur-carrier protein]-C-terminal-Gly-aminoethanethioate + 2-iminoacetate + 1-deoxy-D-xylulose 5-phosphate = [ThiS sulfur-carrier protein]-C-terminal Gly-Gly + 2-[(2R,5Z)-2-carboxy-4-methylthiazol-5(2H)-ylidene]ethyl phosphate + 2 H2O + H(+). Its pathway is cofactor biosynthesis; thiamine diphosphate biosynthesis. In terms of biological role, catalyzes the rearrangement of 1-deoxy-D-xylulose 5-phosphate (DXP) to produce the thiazole phosphate moiety of thiamine. Sulfur is provided by the thiocarboxylate moiety of the carrier protein ThiS. In vitro, sulfur can be provided by H(2)S. The protein is Thiazole synthase of Shewanella sp. (strain ANA-3).